Consider the following 598-residue polypeptide: Peroxisomal targeting signal receptor (598 aa).

Disordered stretches follow at residues 1–54, 135–154, and 208–237; these read MSFM…GEMS, RGGS…MQGG, and AVGK…TTTE. Residues 9–22 show a composition bias toward polar residues; it reads ECSTGRNPLSQFTK. A Glycyl cysteine thioester (Cys-Gly) (interchain with G-Cter in ubiquitin) cross-link involves residue Cys-10. Residue Lys-22 forms a Glycyl lysine isopeptide (Lys-Gly) (interchain with G-Cter in ubiquitin) linkage. The span at 23–35 shows a compositional bias: basic and acidic residues; it reads HTAEDRSLQHDRV. Over residues 220 to 233 the composition is skewed to low complexity; that stretch reads AETATATETVTETE. 7 TPR repeats span residues 304 to 337, 338 to 371, 372 to 409, 410 to 447, 448 to 481, 482 to 515, and 516 to 549; these read PDPF…NTEH, AEAW…EPGN, LSAL…VVDQ, ARNQ…ANID, ADVQ…RPDD, ALLW…RPSF, and VRAR…HKVE.

This sequence belongs to the peroxisomal targeting signal receptor family. In terms of processing, ubiquitination at Cys-10 is UBC4-independent but requires the presence of PEX4. Ubiquitination at Lys-22 is UBC4-dependent.

It localises to the cytoplasm. The protein localises to the peroxisome membrane. Its function is as follows. Binds to the C-terminal PTS1-type tripeptide peroxisomal targeting signal (SKL-type) and plays an essential role in peroxisomal protein import. This is Peroxisomal targeting signal receptor (PAY32) from Yarrowia lipolytica (strain CLIB 122 / E 150) (Yeast).